A 629-amino-acid chain; its full sequence is 1-deoxy-D-xylulose-5-phosphate synthase (629 aa).

Thiamine diphosphate-binding positions include His72 and 113-115 (GHA). Position 144 (Asp144) interacts with Mg(2+). Residues 145 to 146 (GA), Asn174, Tyr287, and Glu370 contribute to the thiamine diphosphate site. Residue Asn174 coordinates Mg(2+).

The protein belongs to the transketolase family. DXPS subfamily. Homodimer. Mg(2+) serves as cofactor. The cofactor is thiamine diphosphate.

The enzyme catalyses D-glyceraldehyde 3-phosphate + pyruvate + H(+) = 1-deoxy-D-xylulose 5-phosphate + CO2. Its pathway is metabolic intermediate biosynthesis; 1-deoxy-D-xylulose 5-phosphate biosynthesis; 1-deoxy-D-xylulose 5-phosphate from D-glyceraldehyde 3-phosphate and pyruvate: step 1/1. Its function is as follows. Catalyzes the acyloin condensation reaction between C atoms 2 and 3 of pyruvate and glyceraldehyde 3-phosphate to yield 1-deoxy-D-xylulose-5-phosphate (DXP). In Prochlorococcus marinus (strain MIT 9215), this protein is 1-deoxy-D-xylulose-5-phosphate synthase.